The chain runs to 251 residues: CDP-diacylglycerol pyrophosphatase (251 aa).

The chain crosses the membrane as a helical span at residues 4 to 24; that stretch reads AGLLFLVMIVIAVVAAGIGYW.

The protein belongs to the Cdh family.

Its subcellular location is the cell inner membrane. It carries out the reaction a CDP-1,2-diacyl-sn-glycerol + H2O = a 1,2-diacyl-sn-glycero-3-phosphate + CMP + 2 H(+). Its pathway is phospholipid metabolism; CDP-diacylglycerol degradation; phosphatidate from CDP-diacylglycerol: step 1/1. This is CDP-diacylglycerol pyrophosphatase from Shigella flexneri.